The sequence spans 212 residues: 3,4-dihydroxy-2-butanone 4-phosphate synthase (212 aa).

D-ribulose 5-phosphate contacts are provided by residues 37–38 (RE), D42, 150–154 (RRGHT), and E174. E38 contacts Mg(2+). H153 provides a ligand contact to Mg(2+).

Belongs to the DHBP synthase family. As to quaternary structure, homodimer. The cofactor is Mg(2+). It depends on Mn(2+) as a cofactor.

The enzyme catalyses D-ribulose 5-phosphate = (2S)-2-hydroxy-3-oxobutyl phosphate + formate + H(+). It participates in cofactor biosynthesis; riboflavin biosynthesis; 2-hydroxy-3-oxobutyl phosphate from D-ribulose 5-phosphate: step 1/1. Catalyzes the conversion of D-ribulose 5-phosphate to formate and 3,4-dihydroxy-2-butanone 4-phosphate. This Shewanella pealeana (strain ATCC 700345 / ANG-SQ1) protein is 3,4-dihydroxy-2-butanone 4-phosphate synthase.